The chain runs to 140 residues: MLSPRRTKFRKQQRGRMEGAATRGNTLTFGDYGLQALEPAWITARQIEAGRRAMTRYIRRGGKIWIRLFPDKPVTMRPAETRMGSGKGAPEFWVAVVKPGRIMYEIAGVSEEVAREAIRLAAYKMPIKTKFIMRETTEES.

The segment covering 1–14 (MLSPRRTKFRKQQR) has biased composition (basic residues). Residues 1 to 22 (MLSPRRTKFRKQQRGRMEGAAT) form a disordered region.

It belongs to the universal ribosomal protein uL16 family. In terms of assembly, part of the 50S ribosomal subunit.

Its function is as follows. Binds 23S rRNA and is also seen to make contacts with the A and possibly P site tRNAs. In Cyanothece sp. (strain PCC 7425 / ATCC 29141), this protein is Large ribosomal subunit protein uL16.